We begin with the raw amino-acid sequence, 345 residues long: Neuropeptide receptor 15 (345 aa).

Residues 1-11 (MSVAVGIPYVC) are Extracellular-facing. The helical transmembrane segment at 12–32 (FFIILSVVGIIGNVIVIYAIA) threads the bilayer. Over 33–40 (GDRNMRKS) the chain is Cytoplasmic. Residues 41–61 (VMNILLLNLAVADLANLIFTI) form a helical membrane-spanning segment. At 62–90 (PEWIPPVFFGSTDWLFPSFLCPVCRYLEC) the chain is on the extracellular side. C82 and C171 form a disulfide bridge. Residues 91–111 (VFLFASISTQMIVCIERYIAI) form a helical membrane-spanning segment. The Cytoplasmic portion of the chain corresponds to 112-125 (VLPMQARQLCSRRN). A helical transmembrane segment spans residues 126–146 (VLITVLVDWIFVACFASPYAV). Over 147-187 (WHSVKTKDRNTNSLRFKLFQLSATCSNTVGKSTWWQGYKLT) the chain is Extracellular. The chain crosses the membrane as a helical span at residues 188–208 (EFLAFYFVPCFIITVVYTKVA). Residues 209 to 246 (KCLWCKDPTLQCETRSCLDNKSSSRSSDALRTRRNVVK) are Cytoplasmic-facing. Residues 247–267 (MLIACVAVYFVCYSPIQVIFL) traverse the membrane as a helical segment. Residues 268–281 (SKAVLNVTIHPPYD) lie on the Extracellular side of the membrane. The helical transmembrane segment at 282–304 (FILLMNALAMTCSASNPLLYTLF) threads the bilayer. The Cytoplasmic segment spans residues 305-345 (SQKFRRRLRDVLYCPSDVENETKTYYSINNTSIVGPRASFN).

Belongs to the G-protein coupled receptor 1 family. Expressed in pharyngeal muscle and AWC, ASG, ASE, ASI, and ASJ sensory neurons. Expressed in ASI neuron. Expressed in AFD neurons and in AVK interneuron.

The protein resides in the cell membrane. In terms of biological role, probable receptor for neuropeptide ligand nlp-8 that plays a role in octopamine signaling and specifically, the octopamine inhibition of aversion responses in olfactory sensory neurons. Plays a crucial role in daf-7 expression. Acts in concert with gpa-4 to activate TGF-beta-like daf-7 secretion in the ASI neuron, thereby promoting larval development and inhibition of dauer diapause. Suppresses immune response against pathogenic infection by inhibiting transcription regulators elt-2 and hlh-30 in ASJ neuron. Promotes pathogen avoidance behavior via intestinal gon-2, independent of aerotaxis. The protein is Neuropeptide receptor 15 (npr-15) of Caenorhabditis elegans.